The chain runs to 392 residues: Cell division protein DivIB (392 aa).

Positions 1 to 88 (MSEKDNNLTP…TQSSEAPIEN (88 aa)) are disordered. Topologically, residues 1–131 (MSEKDNNLTP…KGSAPLLKKM (131 aa)) are cytoplasmic. A compositionally biased stretch (basic and acidic residues) spans 14 to 32 (KHLEYQKRKAEEAKKEKKA). Residues 58 to 76 (TRDEAESAELLEEGFETNN) show a composition bias toward acidic residues. A helical transmembrane segment spans residues 132–152 (WPALAVVVLVFVGSLYLISPL). The region spanning 153 to 224 (SKISTFSVSG…NRFEAIVKEH (72 aa)) is the POTRA domain. Residues 153-392 (SKISTFSVSG…TAQSTTTSSN (240 aa)) lie on the Extracellular side of the membrane. Residues 368–392 (ISAQNAKKTDASSENTAQSTTTSSN) form a disordered region.

The protein belongs to the FtsQ/DivIB family. DivIB subfamily.

It is found in the cell membrane. In terms of biological role, cell division protein that may be involved in stabilizing or promoting the assembly of the division complex. This Lactococcus lactis subsp. lactis (strain KF147) protein is Cell division protein DivIB.